Here is a 95-residue protein sequence, read N- to C-terminus: IgNAR transmembrane form NE (95 aa).

One can recognise an Ig-like domain in the interval 1–36 (LTFSTRSLLNLPAVEWKSGAKYTCTASHSPSQSTVK). Residues 24–35 (CTASHSPSQSTV) are compositionally biased toward polar residues. A disordered region spans residues 24 to 79 (CTASHSPSQSTVKRVIRNPKESPKGSSETRKSPLEIMESPEDYGTEEDQLENVNED). Residues 41-56 (NPKESPKGSSETRKSP) show a composition bias toward basic and acidic residues. Positions 61–77 (ESPEDYGTEEDQLENVN) are enriched in acidic residues. Asn81 carries N-linked (GlcNAc...) asparagine glycosylation.

As to expression, expressed mainly in lymphoid tissues including spleen, epigonal organ and circulating lymphocytes. Also expressed at low levels in the pancreas.

The protein is IgNAR transmembrane form NE of Ginglymostoma cirratum (Nurse shark).